A 734-amino-acid polypeptide reads, in one-letter code: Platelet glycoprotein Ib alpha chain (734 aa).

A signal peptide spans 1 to 16; it reads MALLILLFLLPSPLHS. Positions 17 to 47 constitute an LRRNT domain; sequence QHTCSISKVTSLLEVNCENKKLTALPADLPA. Over 17–612 the chain is Extracellular; sequence QHTCSISKVT…LNSDFCCFLP (596 aa). A disulfide bridge links Cys-20 with Cys-33. LRR repeat units follow at residues 48–69, 72–93, 94–115, 117–140, 141–162, 165–188, and 189–210; these read DTGILHLGENQLGTFSTASLVH, HLTYLYLDRCELTSLQTNGKLI, KLENLDLSHNNLKSLPSLGWAL, ALTTLDVSFNKLGSLSPGVLDGLS, QLQELYLQNNDLKSLPPGLLLP, KLKKLNLANNKLRELPSGLLDGLE, and DLDTLYLQRNWLRTIPKGFFGT. Residues 221–282 enclose the LRRCT domain; that stretch reads NSWYCDCEIL…YSYPGKGCPT (62 aa). Disulfide bonds link Cys-225/Cys-264 and Cys-227/Cys-280. At Tyr-292 the chain carries Sulfotyrosine. 4 O-linked (GalNAc...) threonine glycosylation sites follow: Thr-301, Thr-311, Thr-315, and Thr-316. O-linked (GalNAc...) serine glycosylation is present at Ser-335. 4 O-linked (GalNAc...) threonine glycosylation sites follow: Thr-339, Thr-348, Thr-358, and Thr-377. Residue Ser-382 is glycosylated (O-linked (GalNAc...) serine). Residues Thr-384, Thr-385, and Thr-405 are each glycosylated (O-linked (GalNAc...) threonine). Disordered regions lie at residues 406 to 429 and 460 to 526; these read STLTTPEHSTTPVPTTTILTTPEH and EPST…PEPS. Residues Thr-512, Thr-516, Thr-519, Thr-530, Thr-542, Thr-546, Thr-550, and Thr-562 are each glycosylated (O-linked (GalNAc...) threonine). O-linked (GalNAc...) serine glycosylation occurs at Ser-572. O-linked (GalNAc...) threonine glycosylation occurs at Thr-573. The chain crosses the membrane as a helical span at residues 613–633; it reads LGFYVLGLLWLLFASVVLILL. Residues 634-734 are Cytoplasmic-facing; that stretch reads LTWTWHVTPH…VGIRYSGHSL (101 aa). Phosphoserine is present on residues Ser-711 and Ser-714.

As to quaternary structure, two GP-Ib beta are disulfide-linked to one GP-Ib alpha. GP-IX is complexed with the GP-Ib heterodimer via a non covalent linkage. Interacts with FLNB. Interacts with FLNA (via filamin repeats 4, 9, 12, 17, 19, 21, and 23). O-glycosylated. Post-translationally, glycocalicin is the product of a proteolytic cleavage/shedding, catalyzed by ADAM17, which releases most of the extracellular domain. Binding sites for vWF and thrombin are in this part of the protein.

It is found in the membrane. Functionally, GP-Ib, a surface membrane protein of platelets, participates in the formation of platelet plugs by binding to the A1 domain of vWF, which is already bound to the subendothelium. This Mus musculus (Mouse) protein is Platelet glycoprotein Ib alpha chain (Gp1ba).